A 205-amino-acid polypeptide reads, in one-letter code: Large ribosomal subunit protein uL3c (205 aa).

The segment at 130-150 (RGPMSHGSKNHRQPGSIGAGT) is disordered.

It belongs to the universal ribosomal protein uL3 family. As to quaternary structure, part of the 50S ribosomal subunit.

The protein resides in the plastid. It is found in the chloroplast. Functionally, one of the primary rRNA binding proteins, it binds directly near the 3'-end of the 23S rRNA, where it nucleates assembly of the 50S subunit. This Gracilaria tenuistipitata var. liui (Red alga) protein is Large ribosomal subunit protein uL3c (rpl3).